Consider the following 376-residue polypeptide: N-acetyldiaminopimelate deacetylase (376 aa).

Residue Asp69 is part of the active site. Catalysis depends on Glu128, which acts as the Proton acceptor.

Belongs to the peptidase M20A family. N-acetyldiaminopimelate deacetylase subfamily.

The catalysed reaction is N-acetyl-(2S,6S)-2,6-diaminopimelate + H2O = (2S,6S)-2,6-diaminopimelate + acetate. It functions in the pathway amino-acid biosynthesis; L-lysine biosynthesis via DAP pathway; LL-2,6-diaminopimelate from (S)-tetrahydrodipicolinate (acetylase route): step 3/3. Its function is as follows. Catalyzes the conversion of N-acetyl-diaminopimelate to diaminopimelate and acetate. In Streptococcus pneumoniae (strain 70585), this protein is N-acetyldiaminopimelate deacetylase.